A 122-amino-acid polypeptide reads, in one-letter code: Secreted RxLR effector protein 80 (122 aa).

The N-terminal stretch at 1–21 (MKKRALPIVIFVISLQQSSQS) is a signal peptide. The RxLR motif lies at 72–75 (RSLR).

The protein belongs to the RxLR effector family.

It is found in the secreted. It localises to the host endoplasmic reticulum membrane. In terms of biological role, secreted effector that dos not suppress the host cell death induced by cell death-inducing proteins. This is Secreted RxLR effector protein 80 from Plasmopara viticola (Downy mildew of grapevine).